The sequence spans 443 residues: MHLIAVSINHRTADVALREKVAFKDDAIRSANVDLYETKSILENVILSTCNRTEVYAVADQIHTGRYYIQRFLARSFGLDVEDIKNMTEVKVGDEAVKHLLQVTSGLDSVVLGETQILGQIRNAFFLAQEEDTTGTIFNHLFKQAITFAKKAHNETDIADNAVSVSYAAVELSKKVFGKVNNKQALIIGAGDMSELSLLNLIGSGVTDITIVNRTLSKAQDLAMKHHVKFEPMESLPRLLVDVDIVISSTSSENYIVTNEMLQSISTERKHDSLVMIDIAVPRDIEPNIDTIHDMFSYDVDDLKGLVDANLRERQLAAEQIIQNIPNEIEAHNEWVNMLGVVPVIRALREKAMSIQEDTMDSIDRKLPGLSERERKIISKHTKSIINQMLKDPIKQAKELSSDKKSNEKLELFQSIFDIEAENAYEAKKQKNNMKTGQILSFE.

Residues 49-52 (TCNR), S109, 114-116 (ETQ), and Q120 contribute to the substrate site. C50 functions as the Nucleophile in the catalytic mechanism. 189–194 (GAGDMS) provides a ligand contact to NADP(+).

Belongs to the glutamyl-tRNA reductase family. Homodimer.

It catalyses the reaction (S)-4-amino-5-oxopentanoate + tRNA(Glu) + NADP(+) = L-glutamyl-tRNA(Glu) + NADPH + H(+). It functions in the pathway porphyrin-containing compound metabolism; protoporphyrin-IX biosynthesis; 5-aminolevulinate from L-glutamyl-tRNA(Glu): step 1/2. Its function is as follows. Catalyzes the NADPH-dependent reduction of glutamyl-tRNA(Glu) to glutamate 1-semialdehyde (GSA). The polypeptide is Glutamyl-tRNA reductase (Staphylococcus saprophyticus subsp. saprophyticus (strain ATCC 15305 / DSM 20229 / NCIMB 8711 / NCTC 7292 / S-41)).